The sequence spans 312 residues: Small ribosomal subunit protein RACK1 (312 aa).

WD repeat units follow at residues 9-42 (GHRGWVTSLACPQQAGSYIKVVSTSRDGTVISWK), 63-93 (GHTGFVSCVSLAHATDYALTASWDRSIRMWD), 105-135 (KHTKDVLAVAFSPDDRLIVSAGRDNVIRVWN), 148-180 (GHEDWVSSICFSPSLEHPIVVSGSWDNTIKVWN), 192-222 (GHSNYVSTVTVSPDGSLCASGGKDGAALLWD), 233-262 (NVESPINQIGFSPNRFWMCVATERSLSVYD), and 279-307 (PSECISIAWSADGNTLYSGHKDNLIRVWS).

This sequence belongs to the WD repeat G protein beta family. Ribosomal protein RACK1 subfamily.

The polypeptide is Small ribosomal subunit protein RACK1 (Leishmania major).